The following is a 103-amino-acid chain: Pyrimidine/purine nucleoside phosphorylase (103 aa).

Belongs to the nucleoside phosphorylase PpnP family.

It catalyses the reaction a purine D-ribonucleoside + phosphate = a purine nucleobase + alpha-D-ribose 1-phosphate. It carries out the reaction adenosine + phosphate = alpha-D-ribose 1-phosphate + adenine. The catalysed reaction is cytidine + phosphate = cytosine + alpha-D-ribose 1-phosphate. The enzyme catalyses guanosine + phosphate = alpha-D-ribose 1-phosphate + guanine. It catalyses the reaction inosine + phosphate = alpha-D-ribose 1-phosphate + hypoxanthine. It carries out the reaction thymidine + phosphate = 2-deoxy-alpha-D-ribose 1-phosphate + thymine. The catalysed reaction is uridine + phosphate = alpha-D-ribose 1-phosphate + uracil. The enzyme catalyses xanthosine + phosphate = alpha-D-ribose 1-phosphate + xanthine. Functionally, catalyzes the phosphorolysis of diverse nucleosides, yielding D-ribose 1-phosphate and the respective free bases. Can use uridine, adenosine, guanosine, cytidine, thymidine, inosine and xanthosine as substrates. Also catalyzes the reverse reactions. This is Pyrimidine/purine nucleoside phosphorylase from Shewanella denitrificans (strain OS217 / ATCC BAA-1090 / DSM 15013).